The primary structure comprises 97 residues: MINMIKKIVITTIDSPADDKNIKFLVGLAKLIGKNEISFGEDKILKRDISKNDELREIVKEIIEKYKEKVPNIVKFKEGKIKSDGKIIIRWEYENKS.

This is an uncharacterized protein from Sulfolobus islandicus filamentous virus (isolate Iceland/Hveragerdi) (SIFV).